The sequence spans 307 residues: MEQNQNEEFLVYEFDQINVNADQQEVDLDDQSVVLSTYEFPSFYDMAVDAISKDFNSTHLIMEELDGVNVIYDIFDSEALEKWLDIDTYFELKPFPIERFELFNRLLLHQFQTLAYNRPRASWSTLRNQATQSVIEGFEDEFSDLPIQGMHNESWECLAPELRICFMFRSFKIKPSILLQVSRILAGSLMFPGLNLIGKKSLLDMFNNYNVIEYLDHYFPTSKYDSDEYLKFIRFDLVPDEWKLIVVKHEFENSFRFLNVHGKTEEKPYHKAMRGPPPDQWYTLLRRKFIFRSLKYTKRLIRNLLDY.

This is an uncharacterized protein from Saccharum officinarum (Sugarcane).